A 317-amino-acid chain; its full sequence is DNA-directed RNA polymerase subunit alpha 2 (317 aa).

The alpha N-terminal domain (alpha-NTD) stretch occupies residues 1–227; the sequence is MALENLLHPT…NQLRNIVDIE (227 aa). Residues 241 to 317 form an alpha C-terminal domain (alpha-CTD) region; that stretch reads INPILLKHVE…TLIENWPQDL (77 aa).

The protein belongs to the RNA polymerase alpha chain family. Homodimer. The RNAP catalytic core consists of 2 alpha, 1 beta, 1 beta' and 1 omega subunit. When a sigma factor is associated with the core the holoenzyme is formed, which can initiate transcription.

It carries out the reaction RNA(n) + a ribonucleoside 5'-triphosphate = RNA(n+1) + diphosphate. DNA-dependent RNA polymerase catalyzes the transcription of DNA into RNA using the four ribonucleoside triphosphates as substrates. The sequence is that of DNA-directed RNA polymerase subunit alpha 2 from Francisella tularensis subsp. holarctica (strain LVS).